The sequence spans 344 residues: 3,4-dihydroxy-2-butanone 4-phosphate synthase (344 aa).

Positions 1 to 202 (MILKRVTEAL…VSDLISYRLE (202 aa)) are DHBP synthase. D-ribulose 5-phosphate-binding positions include 27–28 (RE), Asp-32, 139–143 (RTGHT), and Glu-163. Residue Glu-28 coordinates Mg(2+). His-142 is a binding site for Mg(2+). The segment at 203 to 344 (NESLLKMFCQ…GLKLVETISL (142 aa)) is GTP cyclohydrolase II-like.

This sequence in the N-terminal section; belongs to the DHBP synthase family. In the C-terminal section; belongs to the GTP cyclohydrolase II family. The cofactor is Mg(2+). Requires Mn(2+) as cofactor.

The catalysed reaction is D-ribulose 5-phosphate = (2S)-2-hydroxy-3-oxobutyl phosphate + formate + H(+). The protein operates within cofactor biosynthesis; riboflavin biosynthesis; 2-hydroxy-3-oxobutyl phosphate from D-ribulose 5-phosphate: step 1/1. Catalyzes the conversion of D-ribulose 5-phosphate to formate and 3,4-dihydroxy-2-butanone 4-phosphate. This chain is 3,4-dihydroxy-2-butanone 4-phosphate synthase (ribB), found in Helicobacter pylori (strain ATCC 700392 / 26695) (Campylobacter pylori).